The following is a 190-amino-acid chain: Adenylate kinase (190 aa).

Residue 11–16 (GAGKGT) participates in ATP binding. The tract at residues 31-60 (STGDIFRFNLKNDTELGKQARVFMDNGELV) is NMP. AMP contacts are provided by residues Thr32, Arg37, 58–60 (ELV), 86–89 (GYPR), and Gln93. The interval 127–137 (ERGKTSGRADD) is LID. Residue Arg128 participates in ATP binding. Positions 134 and 146 each coordinate AMP. Gly174 serves as a coordination point for ATP.

It belongs to the adenylate kinase family. In terms of assembly, monomer.

It is found in the cytoplasm. The enzyme catalyses AMP + ATP = 2 ADP. It functions in the pathway purine metabolism; AMP biosynthesis via salvage pathway; AMP from ADP: step 1/1. Catalyzes the reversible transfer of the terminal phosphate group between ATP and AMP. Plays an important role in cellular energy homeostasis and in adenine nucleotide metabolism. This Flavobacterium johnsoniae (strain ATCC 17061 / DSM 2064 / JCM 8514 / BCRC 14874 / CCUG 350202 / NBRC 14942 / NCIMB 11054 / UW101) (Cytophaga johnsonae) protein is Adenylate kinase.